Reading from the N-terminus, the 357-residue chain is Sulfate/thiosulfate import ATP-binding protein CysA (357 aa).

The 235-residue stretch at 3-237 (ITIQNLNKHF…PENAFVTEFL (235 aa)) folds into the ABC transporter domain. 35-42 (GPSGCGKT) lines the ATP pocket.

Belongs to the ABC transporter superfamily. Sulfate/tungstate importer (TC 3.A.1.6) family. In terms of assembly, the complex is composed of two ATP-binding proteins (CysA), two transmembrane proteins (CysT and CysW) and a solute-binding protein (CysP).

The protein localises to the cell inner membrane. It carries out the reaction sulfate(out) + ATP + H2O = sulfate(in) + ADP + phosphate + H(+). It catalyses the reaction thiosulfate(out) + ATP + H2O = thiosulfate(in) + ADP + phosphate + H(+). In terms of biological role, part of the ABC transporter complex CysAWTP involved in sulfate/thiosulfate import. Responsible for energy coupling to the transport system. The chain is Sulfate/thiosulfate import ATP-binding protein CysA from Neisseria meningitidis serogroup B (strain ATCC BAA-335 / MC58).